The following is a 324-amino-acid chain: Viral cathepsin (324 aa).

The N-terminal stretch at 1-16 is a signal peptide; it reads MNKIVLYLLVYGATLG. Positions 17 to 113 are cleaved as a propeptide — activation peptide; that stretch reads AAYDLLKAPS…VVLDRPPDKG (97 aa). Cystine bridges form between C134/C175, C168/C208, and C263/C311. The active site involves C137. A glycan (N-linked (GlcNAc...) asparagine; by host) is linked at N159. Active-site residues include H270 and N290.

Belongs to the peptidase C1 family. In terms of processing, synthesized as an inactive proenzyme and activated by proteolytic removal of the inhibitory propeptide.

It carries out the reaction Endopeptidase of broad specificity, hydrolyzing substrates of both cathepsin L and cathepsin B.. Functionally, cysteine protease that plays an essential role in host liquefaction to facilitate horizontal transmission of the virus. May participate in the degradation of foreign protein expressed by the baculovirus system. This chain is Viral cathepsin (VCATH), found in Antheraea pernyi nuclear polyhedrosis virus (ApNPV).